Here is a 248-residue protein sequence, read N- to C-terminus: Ubiquinone biosynthesis O-methyltransferase (248 aa).

S-adenosyl-L-methionine-binding residues include R40, G71, D92, and M135.

Belongs to the methyltransferase superfamily. UbiG/COQ3 family.

It carries out the reaction a 3-demethylubiquinol + S-adenosyl-L-methionine = a ubiquinol + S-adenosyl-L-homocysteine + H(+). The catalysed reaction is a 3-(all-trans-polyprenyl)benzene-1,2-diol + S-adenosyl-L-methionine = a 2-methoxy-6-(all-trans-polyprenyl)phenol + S-adenosyl-L-homocysteine + H(+). Its pathway is cofactor biosynthesis; ubiquinone biosynthesis. Its function is as follows. O-methyltransferase that catalyzes the 2 O-methylation steps in the ubiquinone biosynthetic pathway. This is Ubiquinone biosynthesis O-methyltransferase from Ruegeria pomeroyi (strain ATCC 700808 / DSM 15171 / DSS-3) (Silicibacter pomeroyi).